Here is a 115-residue protein sequence, read N- to C-terminus: Ribonuclease P protein component (115 aa).

The protein belongs to the RnpA family. In terms of assembly, consists of a catalytic RNA component (M1 or rnpB) and a protein subunit.

It catalyses the reaction Endonucleolytic cleavage of RNA, removing 5'-extranucleotides from tRNA precursor.. Functionally, RNaseP catalyzes the removal of the 5'-leader sequence from pre-tRNA to produce the mature 5'-terminus. It can also cleave other RNA substrates such as 4.5S RNA. The protein component plays an auxiliary but essential role in vivo by binding to the 5'-leader sequence and broadening the substrate specificity of the ribozyme. The chain is Ribonuclease P protein component from Bacillus cereus (strain Q1).